A 167-amino-acid chain; its full sequence is Phospholipase A and acyltransferase 1 (167 aa).

Topologically, residues 1–138 (MAVNDCFSLT…GEGVSEQANR (138 aa)) are cytoplasmic. In terms of domain architecture, LRAT spans 20–135 (LIEVFRPCYQ…LRYGEGVSEQ (116 aa)). Histidine 30 is a catalytic residue. Cysteine 119 functions as the Acyl-thioester intermediate in the catalytic mechanism. A helical membrane pass occupies residues 139–159 (AIGTIGLVAAGIDIFTFLGLF). The Lumenal segment spans residues 160 to 167 (PKRQGAKS).

The protein belongs to the H-rev107 family.

It is found in the membrane. It localises to the cytoplasm. The protein resides in the nucleus. The enzyme catalyses a 1,2-diacyl-sn-glycero-3-phosphocholine + H2O = a 1-acyl-sn-glycero-3-phosphocholine + a fatty acid + H(+). The catalysed reaction is a 1,2-diacyl-sn-glycero-3-phosphocholine + H2O = a 2-acyl-sn-glycero-3-phosphocholine + a fatty acid + H(+). It carries out the reaction 1,2-dihexadecanoyl-sn-glycero-3-phosphocholine + H2O = 2-hexadecanoyl-sn-glycero-3-phosphocholine + hexadecanoate + H(+). It catalyses the reaction 1,2-dihexadecanoyl-sn-glycero-3-phosphocholine + H2O = 1-hexadecanoyl-sn-glycero-3-phosphocholine + hexadecanoate + H(+). The enzyme catalyses 1-hexadecanoyl-2-(5Z,8Z,11Z,14Z-eicosatetraenoyl)-sn-glycero-3-phosphoethanolamine + H2O = 2-(5Z,8Z,11Z,14Z)-eicosatetraenoyl-sn-glycero-3-phosphoethanolamine + hexadecanoate + H(+). The catalysed reaction is 1-hexadecanoyl-2-(5Z,8Z,11Z,14Z-eicosatetraenoyl)-sn-glycero-3-phosphoethanolamine + H2O = 1-hexadecanoyl-sn-glycero-3-phosphoethanolamine + (5Z,8Z,11Z,14Z)-eicosatetraenoate + H(+). It carries out the reaction 1,2-di-(9Z-octadecenoyl)-sn-glycero-3-phosphoethanolamine + 1,2-dihexadecanoyl-sn-glycero-3-phosphocholine = hexadecanoyl-sn-glycero-3-phosphocholine + N-hexadecanoyl-1,2-di-(9Z-octadecenoyl)-sn-glycero-3-phosphoethanolamine + H(+). It catalyses the reaction 1,2-dihexadecanoyl-sn-glycero-3-phosphocholine + a 2-acyl-sn-glycero-3-phosphocholine = a 1-hexadecanoyl-2-acyl-sn-glycero-3-phosphocholine + 2-hexadecanoyl-sn-glycero-3-phosphocholine. Exhibits both phospholipase A1/2 and acyltransferase activities. Shows phospholipase A1 (PLA1) and A2 (PLA2) activity, catalyzing the calcium-independent release of fatty acids from the sn-1 or sn-2 position of glycerophospholipids. Shows O-acyltransferase activity, catalyzing the transfer of a fatty acyl group from glycerophospholipid to the hydroxyl group of lysophospholipid. The chain is Phospholipase A and acyltransferase 1 from Rattus norvegicus (Rat).